The following is a 203-amino-acid chain: Regulator of free ubiquitin chains 1 (203 aa).

This sequence belongs to the RFU1 family.

Its subcellular location is the endosome. Its function is as follows. Inhibitor of the DOA4 deubiquitinase involved in the regulation of protein degradation by the proteasome and maintenance of a normal level of free ubiquitin. The polypeptide is Regulator of free ubiquitin chains 1 (RFU1) (Candida glabrata (strain ATCC 2001 / BCRC 20586 / JCM 3761 / NBRC 0622 / NRRL Y-65 / CBS 138) (Yeast)).